Reading from the N-terminus, the 92-residue chain is PqqA binding protein (92 aa).

Belongs to the PqqD family. Monomer. Interacts with PqqE.

Its pathway is cofactor biosynthesis; pyrroloquinoline quinone biosynthesis. Its function is as follows. Functions as a PqqA binding protein and presents PqqA to PqqE, in the pyrroloquinoline quinone (PQQ) biosynthetic pathway. This chain is PqqA binding protein, found in Xanthomonas campestris pv. campestris (strain B100).